The chain runs to 470 residues: TNF receptor-associated factor 4 (470 aa).

The RING-type zinc finger occupies 18 to 58 (CPLCGKPMREPVQVSTCGHRFCDTCLQEFLSEGVFKCPEDQ). TRAF-type zinc fingers lie at residues 101-154 (GHLN…EAYE), 155-208 (SHEG…DTIQ), and 209-267 (SHQY…LAMG). K263 participates in a covalent cross-link: Glycyl lysine isopeptide (Lys-Gly) (interchain with G-Cter in ubiquitin). The stretch at 277-310 (HLAMMCALVSRQRQELQELRRELEELSIGSDGVL) forms a coiled coil. One can recognise an MATH domain in the interval 307-462 (DGVLIWKIGS…DDAVFIRASV (156 aa)). S426 bears the Phosphoserine mark.

It belongs to the TNF receptor-associated factor family. B subfamily. Homotrimer. Interacts with LTBR/TNFRSF3, NGFR/TNFRSF16, RPS6KB1 and TGFB1I1. Interacts with SMURF1. Interacts (via TRAF domain) with MAP3K4 (via kinase domain). Interacts with NCF1, TICAM1, IRAK1 and TRAF6, and is probably part of a complex containing TRAF4, NCF1, TICAM1, IRAK1 and TRAF6. Interacts (via MATH domain) with GP6 and GP1BB. Interacts with EGFR (via C-terminal region); this interaction promotes the formation of EGFR asymmetric dimers. Interacts with PKM; this interaction promotes PKM kinase activity. Polyubiquitinated, leading to its proteasomal degradation. Ubiquitinated at Lys-263 by the SCF(FBXL2) complex, leading to its degradation by the proteasome. In terms of tissue distribution, predominantly expressed in brain. Preferentially expressed by postmitotic undifferentiated neurons in developing central (CNS) and peripheral (PNS) nervous system, and in nervous tissues of sensory organs. In the embryo, protein expression was shown in brain, thymus, salivary glands and intestine. In the adult, protein expression is restricted to the brain (hippocampus and olfactory bulb).

It localises to the cytoplasm. The protein resides in the nucleus. Its subcellular location is the perinuclear region. The protein localises to the cell junction. It is found in the tight junction. It localises to the cell membrane. The protein resides in the cytoskeleton. It carries out the reaction S-ubiquitinyl-[E2 ubiquitin-conjugating enzyme]-L-cysteine + [acceptor protein]-L-lysine = [E2 ubiquitin-conjugating enzyme]-L-cysteine + N(6)-ubiquitinyl-[acceptor protein]-L-lysine.. The protein operates within protein degradation; proteasomal ubiquitin-dependent pathway. Functionally, adapter protein with E3 ligase activity that is involved in many diverse biological processes including cell proliferation, migration, differentiation, DNA repair, platelet activation or apoptosis. Promotes EGFR-mediated signaling by facilitating the dimerization of EGFR and downstream AKT activation thereby promoting cell proliferation. Ubiquitinates SMURF2 through 'Lys-48'-linked ubiquitin chain leading to SMURF2 degradation through the proteasome and subsequently osteogenic differentiation. Promotes 'Lys-63'-mediated ubiquitination of CHK1 which in turn activates cell cycle arrest and activation of DNA repair. In addition, promotes an atypical 'Lys-29'-linked ubiquitination at the C-terminal end of IRS1 which is crucial for insulin-like growth factor (IGF) signal transduction. Regulates activation of NF-kappa-B in response to signaling through Toll-like receptors. Required for normal skeleton development, and for normal development of the respiratory tract. Required for activation of RPS6KB1 in response to TNF signaling. Modulates TRAF6 functions. Inhibits adipogenic differentiation by activating pyruvate kinase PKM activity and subsequently the beta-catenin signaling pathway. The chain is TNF receptor-associated factor 4 (Traf4) from Mus musculus (Mouse).